Reading from the N-terminus, the 317-residue chain is Ventral anterior homeobox 1 (317 aa).

The disordered stretch occupies residues 1-62; the sequence is MEVRYSQDSE…CEKSRASSGD (62 aa). Residues 18–27 are compositionally biased toward basic and acidic residues; that stretch reads GLKEGKEGKD. The segment at residues 92-151 is a DNA-binding region (homeobox); it reads PKRTRTSFTAEQLYRLEMEFQRCQYVVGRERTELARQLNLSETQVKVWFQNRRTKQKKDQ. Residues 203–248 form a disordered region; the sequence is GPSLGITANGGSSSSSRSSAGSSGTAGGSPPLPTVTSSGTVTGLQG. Over residues 212–225 the composition is skewed to low complexity; sequence GGSSSSSRSSAGSS. A compositionally biased stretch (polar residues) spans 236 to 247; the sequence is TVTSSGTVTGLQ.

The protein belongs to the EMX homeobox family. Expressed in the anterior neural keel and later in the preoptic area and optic stalk.

The protein localises to the nucleus. Its function is as follows. Transcription factor that is required for closure of the choroid fissure and together with Vax2 is required for optic nerve differentiation and to limit retinal development to the optic cup. The chain is Ventral anterior homeobox 1 (vax1) from Danio rerio (Zebrafish).